Here is a 211-residue protein sequence, read N- to C-terminus: PLAKKHNVKILPADSEHSAIFQCIQGLPEGALRRIILTASGGAFRDLPVEKLKEVKVADALKHPNWNMGKKITVDSATLFNKGLEVIEAHYLFGAEYDDIEIVIHPQSIIHSMVETQDSSVLAQLGWPDMRLPILYTLSWPERVYCSEITWPRLDLCNVDLTFKKPDHVKYPSMDLAYAAGRAGGTMTGVLSAANEKAVEMFIDEKISYLD.

A Mn(2+)-binding site is contributed by Asp14. 1-deoxy-D-xylulose 5-phosphate-binding residues include Ser15, Glu16, Ser40, His63, Ser76, Asn81, Lys82, and Glu85. Glu16 provides a ligand contact to Mn(2+). Glu85 contacts Mn(2+).

It belongs to the DXR family. It depends on Mn(2+) as a cofactor. The cofactor is Mg(2+). Mostly expressed in flowers and, to a lower extent, in leaves.

Its subcellular location is the plastid. It localises to the chloroplast stroma. It catalyses the reaction 2-C-methyl-D-erythritol 4-phosphate + NADP(+) = 1-deoxy-D-xylulose 5-phosphate + NADPH + H(+). The protein operates within isoprenoid biosynthesis; isopentenyl diphosphate biosynthesis via DXP pathway; isopentenyl diphosphate from 1-deoxy-D-xylulose 5-phosphate: step 1/6. Enzyme of the plastid non-mevalonate pathway for isoprenoid biosynthesis that catalyzes the NADPH-dependent rearrangement and reduction of 1-deoxy-D-xylulose-5-phosphate (DXP) to 2-C-methyl-D-erythritol 4-phosphate (MEP). Required for chloroplast development. This Thymus vulgaris (Thyme) protein is 1-deoxy-D-xylulose 5-phosphate reductoisomerase.